The chain runs to 304 residues: Virulence protein VirA (304 aa).

Its function is as follows. Could be involved in the biosynthesis of a major surface antigen important for virulence. The polypeptide is Virulence protein VirA (virA) (Vibrio anguillarum (strain ATCC 68554 / 775) (Listonella anguillarum)).